The sequence spans 872 residues: Paramyosin (872 aa).

Residues 1-31 (MSLYRSPSAALLKSPSQAAFGAPFGSMSVAD) are nonhelical region. Positions 32-851 (LGSLTRLEDK…ESSLHLIRAK (820 aa)) form a coiled coil. Residues 294 to 376 (EITQWKSKFD…ALLERAREQL (83 aa)) are interaction with unc-89. The nonhelical region stretch occupies residues 856-866 (VVTGKSSSKIF).

Belongs to the paramyosin family. As to quaternary structure, homodimer. May interact with unc-89 (via SH3 domain). In terms of processing, phosphorylated on serine residues in the N-terminal non-helical region. In terms of tissue distribution, expressed in body wall muscles of larvae and adults (at protein level). Expressed in gonadal myoepithelial sheath cells (at protein level).

The protein localises to the cytoplasm. The protein resides in the myofibril. Its subcellular location is the sarcomere. It localises to the a band. Functionally, structural component of the muscle thick filaments which is involved in assembly and organization of sarcomere myofilaments. Involved in ovulation. Plays a role in the formation of muscle connections, also called muscle arm extensions, between the body wall and the motor axons in the dorsal and ventral cord. The polypeptide is Paramyosin (unc-15) (Caenorhabditis elegans).